A 362-amino-acid chain; its full sequence is Terpene synthase 3 (362 aa).

Positions 90–95 (DDFLER) match the DDxx(x)D/E motif motif. The short motif at 239–247 (NDCVSYAKE) is the NDxxSxxxD/E motif element.

This sequence belongs to the terpene synthase family.

The enzyme catalyses (2E,6E)-farnesyl diphosphate = beta-maaliene + diphosphate. It catalyses the reaction (2E,6E)-farnesyl diphosphate = aristolene + diphosphate. It carries out the reaction (2E,6E)-farnesyl diphosphate = calarene + diphosphate. The catalysed reaction is (2E)-geranyl diphosphate = (E)-beta-ocimene + diphosphate. The enzyme catalyses (2E)-geranyl diphosphate = (Z)-beta-ocimene + diphosphate. It catalyses the reaction (2E)-geranyl diphosphate + H2O = linalool + diphosphate. It carries out the reaction (2E)-geranyl diphosphate = beta-myrcene + diphosphate. Terpene synthase that converts its substrate farnesyl diphosphate (FPP) into an unidentified sesquiterpene as a major product, as well as beta-maaliene, aristolene, calarene and 2 additional unidentified sesquiterpene as minor products. Is also able to convert geranyl diphosphate (GPP) into a mixture of monoterpenes including (Z)-beta-ocimene, (E)-beta-ocimene, allo-ocimene, linalool and beta-myrcene. The polypeptide is Terpene synthase 3 (Dictyostelium discoideum (Social amoeba)).